A 581-amino-acid chain; its full sequence is Putative protein phosphatase 2C 22 (581 aa).

An N-terminal signal peptide occupies residues 1-21 (MVISVPLFSSVLLALVVAVPA). The PPM-type phosphatase domain maps to 102–478 (KYASSAMQGL…NNATAILVQF (377 aa)). 4 residues coordinate Mn(2+): aspartate 138, glycine 139, aspartate 373, and asparagine 469. Residues 538–563 (SDEVAGGAAVAEQHQHNPEGGGEQQL) are disordered.

Belongs to the PP2C family. It depends on Mg(2+) as a cofactor. Mn(2+) is required as a cofactor.

The enzyme catalyses O-phospho-L-seryl-[protein] + H2O = L-seryl-[protein] + phosphate. It catalyses the reaction O-phospho-L-threonyl-[protein] + H2O = L-threonyl-[protein] + phosphate. In Oryza sativa subsp. japonica (Rice), this protein is Putative protein phosphatase 2C 22.